A 297-amino-acid chain; its full sequence is Homoserine kinase (297 aa).

85-95 (PPTRGMGSSSA) is an ATP binding site.

This sequence belongs to the GHMP kinase family. Homoserine kinase subfamily.

It localises to the cytoplasm. It catalyses the reaction L-homoserine + ATP = O-phospho-L-homoserine + ADP + H(+). It participates in amino-acid biosynthesis; L-threonine biosynthesis; L-threonine from L-aspartate: step 4/5. Its function is as follows. Catalyzes the ATP-dependent phosphorylation of L-homoserine to L-homoserine phosphate. This Desulfitobacterium hafniense (strain DSM 10664 / DCB-2) protein is Homoserine kinase.